We begin with the raw amino-acid sequence, 290 residues long: Taxis protein CheF1 (290 aa).

Interacts with chemotaxis (Che) proteins as well as flagella accessory (Fla) proteins.

Functionally, involved in taxis signal transduction. Essential for the ability to control the direction of flagellar rotation. May have a role between CheY and the flagellum. This Halobacterium salinarum (strain ATCC 29341 / DSM 671 / R1) protein is Taxis protein CheF1 (cheF1).